Here is a 465-residue protein sequence, read N- to C-terminus: Probable dipeptidase A (465 aa).

Cysteine 3 is an active-site residue.

Belongs to the peptidase C69 family.

The catalysed reaction is an L-aminoacyl-L-amino acid + H2O = 2 an L-alpha-amino acid. In Streptococcus pyogenes serotype M3 (strain SSI-1), this protein is Probable dipeptidase A (pepDA).